The sequence spans 123 residues: uncharacterized protein (123 aa).

Positions 36–76 form a coiled coil; it reads VDRQENKKEFLSAEEAREKFKELINQVRSWKEQMSTLSKYA.

This is an uncharacterized protein from Aquifex aeolicus (strain VF5).